A 392-amino-acid chain; its full sequence is Phosphopentomutase (392 aa).

Residues Asp-15, Asp-287, His-292, Asp-328, His-329, and His-340 each coordinate Mn(2+).

The protein belongs to the phosphopentomutase family. Mn(2+) is required as a cofactor.

It localises to the cytoplasm. The catalysed reaction is 2-deoxy-alpha-D-ribose 1-phosphate = 2-deoxy-D-ribose 5-phosphate. It carries out the reaction alpha-D-ribose 1-phosphate = D-ribose 5-phosphate. It functions in the pathway carbohydrate degradation; 2-deoxy-D-ribose 1-phosphate degradation; D-glyceraldehyde 3-phosphate and acetaldehyde from 2-deoxy-alpha-D-ribose 1-phosphate: step 1/2. Functionally, isomerase that catalyzes the conversion of deoxy-ribose 1-phosphate (dRib-1-P) and ribose 1-phosphate (Rib-1-P) to deoxy-ribose 5-phosphate (dRib-5-P) and ribose 5-phosphate (Rib-5-P), respectively. The polypeptide is Phosphopentomutase (Syntrophotalea carbinolica (strain DSM 2380 / NBRC 103641 / GraBd1) (Pelobacter carbinolicus)).